Reading from the N-terminus, the 492-residue chain is MERSPDVSPGPSRSFKEELLCAVCYDPFRDAVTLRCGHNFCRGCVSRCWEVQVSPTCPVCKDRASPADLRTNHTLNNLVEKLLREEAEGARWTSYRFSRVCRLHRGQLSLFCLEDKELLCCSCQADPRHQGHRVQPVKDTAHDFRAKCRNMEHALREKAKAFWAMRRSYEAIAKHNQVEAAWLEGRIRQEFDKLREFLRVEEQAILDAMAEETRQKQLLADEKMKQLTEETEVLAHEIERLQMEMKEDDVSFLMKHKSRKRRLFCTMEPEPVQPGMLIDVCKYLGSLQYRVWKKMLASVELPFSFDPNTAAGWLSVSDDLTSVTNHGYRVQVENPERFSSAPCLLGSRVFSQGSHAWEVALGGLQSWRVGVVRVRQDSGAEGHSHSCYHDTRSGFWYVCRTQGVEGDHCVTSDPATSPLVLAIPRRLRVELECEEGELSFYDAERHCHLYTFHARFGEVRPYFYLGGARGAGPPEPLRICPLHISVKEELDG.

Met1 is subject to N-acetylmethionine. A phosphoserine mark is found at Ser4 and Ser8. Residues 21–61 (CAVCYDPFRDAVTLRCGHNFCRGCVSRCWEVQVSPTCPVCK) form an RING-type zinc finger. The segment at 96 to 137 (RFSRVCRLHRGQLSLFCLEDKELLCCSCQADPRHQGHRVQPV) adopts a B box-type zinc-finger fold. 4 residues coordinate Zn(2+): Cys101, His104, Cys123, and His129. The stretch at 210–249 (AEETRQKQLLADEKMKQLTEETEVLAHEIERLQMEMKEDD) forms a coiled coil. Residues 283-486 (YLGSLQYRVW…LRICPLHISV (204 aa)) enclose the B30.2/SPRY domain.

Interacts with PKM isoform M2, but not isoform M1; this interaction may compete with that between PKM and FGFR1, and hence reduces FGFR1-dependent tyrosine phosphorylation of PKM. Interacts with IRF7; this interaction promotes IRF7 proteasomal degradation. Interacts with TRAF3; this interaction promotes TRAF3 activation.

It is found in the cytoplasm. The protein localises to the nucleus. It carries out the reaction S-ubiquitinyl-[E2 ubiquitin-conjugating enzyme]-L-cysteine + [acceptor protein]-L-lysine = [E2 ubiquitin-conjugating enzyme]-L-cysteine + N(6)-ubiquitinyl-[acceptor protein]-L-lysine.. The protein operates within protein modification; protein ubiquitination. In terms of biological role, E3 ubiquitin-protein ligase that participates in multiple biological processes including cell death, glucose metabolism, and in particular, the innate immune response. Mediates 'Lys-63'-linked polyubiquitination of TRAF3 thereby promoting type I interferon production via RIG-I signaling pathway. Can also catalyze 'Lys-48'-linked polyubiquitination and proteasomal degradation of viral proteins such as influenza virus PB2. Acts as a negative feedback regulator of TLR7- and TLR9-triggered signaling. Mechanistically, promotes the 'Lys-48'-linked ubiquitination of IRF7 and induces its degradation via a proteasome-dependent pathway. Reduces FGFR1-dependent tyrosine phosphorylation of PKM, inhibiting PKM-dependent lactate production, glucose metabolism, and cell growth. In Pongo abelii (Sumatran orangutan), this protein is E3 ubiquitin-protein ligase TRIM35 (TRIM35).